Consider the following 652-residue polypeptide: Nucleolar GTP-binding protein 1 (652 aa).

The 173-residue stretch at 169–341 (RTIIICGFPN…VKTEACERLL (173 aa)) folds into the OBG-type G domain. GTP is bound by residues 175 to 182 (GFPNVGKS), 221 to 225 (DTPGI), and 289 to 292 (NKID). The segment at 501–521 (RLSSRKNKPVIPRNKQPKVRD) is disordered.

Belongs to the TRAFAC class OBG-HflX-like GTPase superfamily. OBG GTPase family. NOG subfamily.

It localises to the nucleus. The protein resides in the nucleolus. In terms of biological role, involved in the biogenesis of the 60S ribosomal subunit. Required for normal assembly of the mitotic spindle. May be involved in both centrosome-dependent and centrosome-independent spindle assembly programs. Acts as a TP53 repressor, preventing TP53 stabilization and cell cycle arrest. This Drosophila melanogaster (Fruit fly) protein is Nucleolar GTP-binding protein 1.